We begin with the raw amino-acid sequence, 158 residues long: Transcriptional regulator MraZ (158 aa).

SpoVT-AbrB domains lie at 7–54 (NIEA…PEEV) and 84–127 (VEII…AKER).

Belongs to the MraZ family. Forms oligomers.

It localises to the cytoplasm. The protein localises to the nucleoid. This is Transcriptional regulator MraZ from Bacteroides fragilis (strain ATCC 25285 / DSM 2151 / CCUG 4856 / JCM 11019 / LMG 10263 / NCTC 9343 / Onslow / VPI 2553 / EN-2).